The primary structure comprises 169 residues: Regulator of ribonuclease activity A (169 aa).

This sequence belongs to the RraA family. As to quaternary structure, homotrimer. Binds to both RNA-binding sites in the C-terminal region of Rne and to RhlB.

It is found in the cytoplasm. Its function is as follows. Globally modulates RNA abundance by binding to RNase E (Rne) and regulating its endonucleolytic activity. Can modulate Rne action in a substrate-dependent manner by altering the composition of the degradosome. Modulates RNA-binding and helicase activities of the degradosome. This chain is Regulator of ribonuclease activity A, found in Photorhabdus laumondii subsp. laumondii (strain DSM 15139 / CIP 105565 / TT01) (Photorhabdus luminescens subsp. laumondii).